A 502-amino-acid chain; its full sequence is ATP synthase subunit alpha (502 aa).

The interval 117–139 (GMGPVLTSKTRPIESPAPGVMDR) is disordered. 169–176 (GDRQTGKT) contributes to the ATP binding site.

It belongs to the ATPase alpha/beta chains family. F-type ATPases have 2 components, CF(1) - the catalytic core - and CF(0) - the membrane proton channel. CF(1) has five subunits: alpha(3), beta(3), gamma(1), delta(1), epsilon(1). CF(0) has three main subunits: a(1), b(2) and c(9-12). The alpha and beta chains form an alternating ring which encloses part of the gamma chain. CF(1) is attached to CF(0) by a central stalk formed by the gamma and epsilon chains, while a peripheral stalk is formed by the delta and b chains.

The protein resides in the cell membrane. The enzyme catalyses ATP + H2O + 4 H(+)(in) = ADP + phosphate + 5 H(+)(out). Its function is as follows. Produces ATP from ADP in the presence of a proton gradient across the membrane. The alpha chain is a regulatory subunit. The protein is ATP synthase subunit alpha of Bacillus licheniformis (strain ATCC 14580 / DSM 13 / JCM 2505 / CCUG 7422 / NBRC 12200 / NCIMB 9375 / NCTC 10341 / NRRL NRS-1264 / Gibson 46).